Consider the following 371-residue polypeptide: Queuine tRNA-ribosyltransferase (371 aa).

Catalysis depends on Asp-90, which acts as the Proton acceptor. Residues 90–94 (DSGGF), Asp-144, Gln-189, and Gly-215 contribute to the substrate site. Residues 246–252 (GVGTPEN) form an RNA binding region. Asp-265 functions as the Nucleophile in the catalytic mechanism. The RNA binding; important for wobble base 34 recognition stretch occupies residues 270–274 (TRNAR). Zn(2+) contacts are provided by Cys-303, Cys-305, Cys-308, and His-334.

Belongs to the queuine tRNA-ribosyltransferase family. As to quaternary structure, homodimer. Within each dimer, one monomer is responsible for RNA recognition and catalysis, while the other monomer binds to the replacement base PreQ1. Zn(2+) serves as cofactor.

The catalysed reaction is 7-aminomethyl-7-carbaguanine + guanosine(34) in tRNA = 7-aminomethyl-7-carbaguanosine(34) in tRNA + guanine. The protein operates within tRNA modification; tRNA-queuosine biosynthesis. Catalyzes the base-exchange of a guanine (G) residue with the queuine precursor 7-aminomethyl-7-deazaguanine (PreQ1) at position 34 (anticodon wobble position) in tRNAs with GU(N) anticodons (tRNA-Asp, -Asn, -His and -Tyr). Catalysis occurs through a double-displacement mechanism. The nucleophile active site attacks the C1' of nucleotide 34 to detach the guanine base from the RNA, forming a covalent enzyme-RNA intermediate. The proton acceptor active site deprotonates the incoming PreQ1, allowing a nucleophilic attack on the C1' of the ribose to form the product. After dissociation, two additional enzymatic reactions on the tRNA convert PreQ1 to queuine (Q), resulting in the hypermodified nucleoside queuosine (7-(((4,5-cis-dihydroxy-2-cyclopenten-1-yl)amino)methyl)-7-deazaguanosine). The polypeptide is Queuine tRNA-ribosyltransferase (Helicobacter acinonychis (strain Sheeba)).